Reading from the N-terminus, the 140-residue chain is Large-conductance mechanosensitive channel (140 aa).

A run of 3 helical transmembrane segments spans residues 14–34 (VLDL…VKSL), 37–57 (YLIN…DWVL), and 66–86 (FGSF…VFIL).

The protein belongs to the MscL family. Homopentamer.

It is found in the cell membrane. Its function is as follows. Channel that opens in response to stretch forces in the membrane lipid bilayer. May participate in the regulation of osmotic pressure changes within the cell. The sequence is that of Large-conductance mechanosensitive channel from Pediococcus pentosaceus (strain ATCC 25745 / CCUG 21536 / LMG 10740 / 183-1w).